The primary structure comprises 147 residues: Protein MioC (147 aa).

The Flavodoxin-like domain maps to 4-143 (ITLISGSTLG…PAEEWLGSWV (140 aa)).

It belongs to the flavodoxin family. MioC subfamily. In terms of assembly, homodimer. FMN serves as cofactor.

In terms of biological role, probable electron transporter required for biotin synthase activity. The sequence is that of Protein MioC (mioC) from Escherichia coli (strain K12).